Reading from the N-terminus, the 496-residue chain is Cytochrome P450 monooxygenase ausR (496 aa).

Residues 12–32 traverse the membrane as a helical segment; that stretch reads IGLYILWTIPVLFVIFKLLAP. Residue C435 participates in heme binding.

This sequence belongs to the cytochrome P450 family. Heme is required as a cofactor.

The protein localises to the membrane. It functions in the pathway secondary metabolite biosynthesis; terpenoid biosynthesis. Functionally, cytochrome P450 monooxygenase; part of the gene cluster B that mediates the biosynthesis of the fungal meroterpenoid acetoxydehydroaustin. The first step of the pathway is the synthesis of 3,5-dimethylorsellinic acid by the polyketide synthase ausA. 3,5-dimethylorsellinic acid is then prenylated by the polyprenyl transferase ausN. Further epoxidation by the FAD-dependent monooxygenase ausM and cyclization by the probable terpene cyclase ausL lead to the formation of protoaustinoid A. Protoaustinoid A is then oxidized to spiro-lactone preaustinoid A3 by the combined action of the FAD-binding monooxygenases ausB and ausC, and the dioxygenase ausE. Acid-catalyzed keto-rearrangement and ring contraction of the tetraketide portion of preaustinoid A3 by ausJ lead to the formation of preaustinoid A4. The aldo-keto reductase ausK, with the help of ausH, is involved in the next step by transforming preaustinoid A4 into isoaustinone which is in turn hydroxylated by the P450 monooxygenase ausI to form austinolide. The cytochrome P450 monooxygenase ausG then modifies austinolide to austinol. Austinol is further acetylated to austin by the O-acetyltransferase ausP, which spontaneously changes to dehydroaustin. The cytochrome P450 monooxygenase then converts dehydroaustin is into 7-dehydrodehydroaustin. The hydroxylation catalyzed by ausR permits the second O-acetyltransferase ausQ to add an additional acetyl group to the molecule, leading to the formation of acetoxydehydroaustin. Due to genetic rearrangements of the clusters and the subsequent loss of some enzymes, the end product of the Penicillium brasilianum austinoid biosynthesis clusters is acetoxydehydroaustin. The protein is Cytochrome P450 monooxygenase ausR of Penicillium brasilianum.